We begin with the raw amino-acid sequence, 128 residues long: Large ribosomal subunit protein bL17 (128 aa).

This sequence belongs to the bacterial ribosomal protein bL17 family. Part of the 50S ribosomal subunit. Contacts protein L32.

The chain is Large ribosomal subunit protein bL17 from Ehrlichia ruminantium (strain Gardel).